The primary structure comprises 373 residues: 3 beta-hydroxysteroid dehydrogenase/Delta 5--&gt;4-isomerase (373 aa).

Y155 acts as the Proton acceptor in catalysis. K159 serves as a coordination point for NAD(+). The chain crosses the membrane as a helical span at residues 288-308 (ISLEYWLAFLLEIVSFLLSPI).

This sequence belongs to the 3-beta-HSD family.

The protein localises to the endoplasmic reticulum membrane. Its subcellular location is the mitochondrion membrane. It carries out the reaction a 3beta-hydroxy-Delta(5)-steroid + NAD(+) = a 3-oxo-Delta(5)-steroid + NADH + H(+). The catalysed reaction is a 3-oxo-Delta(5)-steroid = a 3-oxo-Delta(4)-steroid. It functions in the pathway lipid metabolism; steroid biosynthesis. Its function is as follows. 3-beta-HSD is a bifunctional enzyme, that catalyzes the oxidative conversion of Delta(5)-ene-3-beta-hydroxy steroid, and the oxidative conversion of ketosteroids. The 3-beta-HSD enzymatic system plays a crucial role in the biosynthesis of all classes of hormonal steroids. This is 3 beta-hydroxysteroid dehydrogenase/Delta 5--&gt;4-isomerase (HSD3B) from Canis lupus familiaris (Dog).